The following is a 420-amino-acid chain: MKTLIARHKAGEHIGICSVCSAHPLVIEAALAFDRNSTRKVLIEATSNQVNQFGGYTGMTPADFREFVFAIADKVGFARERIILGGDHLGPNCWQQENADAAMEKSVELVKAYVRAGFSKIHLDASMSCADDSIPLAPETVAERAAVLCLAAESVATDCQREQLNYVIGTEVPVPGGEASAIQSVHITQVEDAANTLRTHQKAFIARGLAEALTRVIAIVVQPGVEFDHSNIIHYQAQXAQALAQWIEKTKMVYEAHSTDYQTQXAYRELVRDHFAILKVGPALTFALREAIFALAQIEQELIAPENRSRCLAVIEEVMLDEPQYWKKYYRTGFNDSLLDIRYSLSDRIRYYWPHSRIKNSVETMMVNLEGVDIPLGMISQYLPKQFERIQSGELSAIPHQLIMDKIYDVLRAYRYGCAE.

Belongs to the GatZ/KbaZ family. GatZ subfamily. As to quaternary structure, forms a complex with GatY.

It participates in carbohydrate metabolism; D-tagatose 6-phosphate degradation; D-glyceraldehyde 3-phosphate and glycerone phosphate from D-tagatose 6-phosphate: step 2/2. In terms of biological role, component of the tagatose-1,6-bisphosphate aldolase GatYZ that is required for full activity and stability of the Y subunit. Could have a chaperone-like function for the proper and stable folding of GatY. When expressed alone, GatZ does not show any aldolase activity. Is involved in the catabolism of galactitol. This chain is D-tagatose-1,6-bisphosphate aldolase subunit GatZ, found in Escherichia coli O6:H1 (strain CFT073 / ATCC 700928 / UPEC).